A 79-amino-acid polypeptide reads, in one-letter code: Conotoxin Vi6.9 (79 aa).

Residues 1–22 (MKLTCMVIITVLFLTASQLITA) form the signal peptide. Positions 23 to 47 (DYSRDQRQYRAVRLGDEMRNFKGAR) are excised as a propeptide. 3 disulfide bridges follow: Cys-49/Cys-62, Cys-56/Cys-67, and Cys-61/Cys-77. 4-hydroxyproline is present on residues Pro-60 and Pro-63.

Belongs to the conotoxin O1 superfamily. Expressed by the venom duct.

It localises to the secreted. Functionally, ion channel inhibitor that inhibits the increase in intracellular calcium upon depolarization in DRG neurons. In vivo, both intraperitoneal and intracranial injections into mice induce hyperactivity. This Conus virgo (Virgin cone) protein is Conotoxin Vi6.9.